Consider the following 343-residue polypeptide: Glyceraldehyde-3-phosphate dehydrogenase 1 (343 aa).

NAD(+)-binding positions include 13 to 14, aspartate 35, arginine 79, and serine 121; that span reads RI. Residues 154 to 156, threonine 185, 214 to 215, and arginine 237 each bind D-glyceraldehyde 3-phosphate; these read SCT and TG. Cysteine 155 serves as the catalytic Nucleophile. Asparagine 319 contacts NAD(+).

Belongs to the glyceraldehyde-3-phosphate dehydrogenase family. As to quaternary structure, homotetramer.

Its subcellular location is the cytoplasm. The enzyme catalyses D-glyceraldehyde 3-phosphate + phosphate + NAD(+) = (2R)-3-phospho-glyceroyl phosphate + NADH + H(+). The protein operates within carbohydrate degradation; glycolysis; pyruvate from D-glyceraldehyde 3-phosphate: step 1/5. Functionally, catalyzes the oxidative phosphorylation of glyceraldehyde 3-phosphate (G3P) to 1,3-bisphosphoglycerate (BPG) using the cofactor NAD. The first reaction step involves the formation of a hemiacetal intermediate between G3P and a cysteine residue, and this hemiacetal intermediate is then oxidized to a thioester, with concomitant reduction of NAD to NADH. The reduced NADH is then exchanged with the second NAD, and the thioester is attacked by a nucleophilic inorganic phosphate to produce BPG. This Trichormus variabilis (strain ATCC 29413 / PCC 7937) (Anabaena variabilis) protein is Glyceraldehyde-3-phosphate dehydrogenase 1 (gap1).